Here is a 519-residue protein sequence, read N- to C-terminus: Ribonuclease Y (519 aa).

Residues 6 to 26 traverse the membrane as a helical segment; that stretch reads VPFYLLIFLVGIGLGVLTFWA. The 64-residue stretch at 209–272 folds into the KH domain; sequence TVCTVTIPNE…HIAKMALTEL (64 aa). An HD domain is found at 335–428; sequence VLDHSLEVSH…CSAADAISAS (94 aa).

Belongs to the RNase Y family.

It is found in the cell membrane. Endoribonuclease that initiates mRNA decay. The polypeptide is Ribonuclease Y (Protochlamydia amoebophila (strain UWE25)).